The chain runs to 174 residues: Heat shock protein 22 (174 aa).

Residues 44 to 154 form the sHSP domain; sequence QIARWQEQEF…TLKEREVTIE (111 aa). Threonine 152 carries the phosphothreonine modification. The segment at 152-174 is disordered; sequence TIEQTGEPAKKSAEEPNDKAASQ. The span at 159-174 shows a compositional bias: basic and acidic residues; the sequence is PAKKSAEEPNDKAASQ.

This sequence belongs to the small heat shock protein (HSP20) family.

The sequence is that of Heat shock protein 22 (Hsp22) from Drosophila melanogaster (Fruit fly).